Reading from the N-terminus, the 770-residue chain is Protein PAT1 homolog 1 (770 aa).

The segment at 1–26 (MFRYESLEDCPLDEDEDAFQGLGEED) is disordered. The interval 1 to 84 (MFRYESLEDC…EMDLLGDHEE (84 aa)) is region A; interaction with DDX6/RCK. The tract at residues 1–397 (MFRYESLEDC…HRSSHQDHLR (397 aa)) is involved in nuclear foci localization. The span at 7–26 (LEDCPLDEDEDAFQGLGEED) shows a compositional bias: acidic residues. Positions 85–388 (NLAERLSKMV…LNGAGDRGSH (304 aa)) are region N; interaction with decapping machinery. The Nuclear export signal signature appears at 86–95 (LAERLSKMVI). S177 carries the phosphoserine modification. At T178 the chain carries Phosphothreonine. A phosphoserine mark is found at S179 and S184. T194 is subject to Phosphothreonine. Residues R217, R223, and R263 each carry the asymmetric dimethylarginine modification. An involved in RNA-binding region spans residues 223–397 (RYPAPYGERM…HRSSHQDHLR (175 aa)). S278 bears the Phosphoserine mark. R284 bears the Asymmetric dimethylarginine mark. Residues 314–323 (GFRAFFSAPP) are compositionally biased toward low complexity. Disordered stretches follow at residues 314–344 (GFRA…QNLR) and 360–399 (QHRR…LRKD). Residues 324 to 337 (SATPPPQQHPPGPG) show a composition bias toward pro residues. Residues 367–380 (QRQQQNRSQHRNLN) are compositionally biased toward low complexity. R385 carries the omega-N-methylarginine modification. The segment covering 385–399 (RGSHRSSHQDHLRKD) has biased composition (basic and acidic residues). Positions 389–448 (RSSHQDHLRKDPYANLMLQREKDWVSKIQMMQLQSTDPYLDDFYYQNYFEKLEKLSAAEE) are region H. Residues 398–770 (KDPYANLMLQ…TKLQLVQGIR (373 aa)) form an involved in nuclear speckle localization region. A region C region spans residues 449–770 (IQGDGPKKER…TKLQLVQGIR (322 aa)).

Belongs to the PAT1 family. As to quaternary structure, interacts (via region A) with DDX6/RCK. Interacts (via region H and region C) with LSM1 and LSM4. Interacts (via region N) with DCP1A, DCP2, EDC3, EDC4 and XRN1. Interacts with the CCR4-NOT complex. Interacts with the Lsm-containing SMN-Sm protein complex. Interacts with EIF4ENIF1/4E-T. As to expression, ubiquitous.

It is found in the cytoplasm. The protein localises to the P-body. It localises to the nucleus. Its subcellular location is the PML body. The protein resides in the nucleus speckle. RNA-binding protein involved in deadenylation-dependent decapping of mRNAs, leading to the degradation of mRNAs. Acts as a scaffold protein that connects deadenylation and decapping machinery. Required for cytoplasmic mRNA processing body (P-body) assembly. Functionally, (Microbial infection) In case of infection, required for translation and replication of hepatitis C virus (HCV). The sequence is that of Protein PAT1 homolog 1 (PATL1) from Homo sapiens (Human).